Reading from the N-terminus, the 81-residue chain is Neurotoxin LmNaTx11.1 (81 aa).

The N-terminal stretch at 1–18 (MKIVIIFFIAMMAVGVYS) is a signal peptide. In terms of domain architecture, LCN-type CS-alpha/beta spans 19–80 (KDGYLVKKNG…PTYPSSKTCS (62 aa)). 4 disulfides stabilise this stretch: C29–C79, C33–C56, C42–C61, and C46–C63.

The protein belongs to the long (4 C-C) scorpion toxin superfamily. Sodium channel inhibitor family. Beta subfamily. As to expression, expressed by the venom gland.

It is found in the secreted. Binds voltage-independently at site-4 of sodium channels (Nav) and shift the voltage of activation toward more negative potentials thereby affecting sodium channel activation and promoting spontaneous and repetitive firing. This Lychas mucronatus (Chinese swimming scorpion) protein is Neurotoxin LmNaTx11.1.